The following is a 200-amino-acid chain: MIHLLLVVAAYLLGSLSFAVIVSRAMGLPDPRSFGSGNPGATNVLRTGRKTAAILTLLGDALKGWVAVVAARGLAAQFGLDDDIVLLCALAAFIGHLFPVFFGFQGGKGVATALGILVALDPWLGLACLATWVAMALVFRISSLSALVTAVLAPVYAGLLLGWNDSATTVLVIALLLVYRHKANLLKLVTGQEARIGKRS.

5 helical membrane-spanning segments follow: residues 2 to 22, 51 to 71, 84 to 104, 113 to 133, and 143 to 163; these read IHLLLVVAAYLLGSLSFAVIV, TAAILTLLGDALKGWVAVVAA, IVLLCALAAFIGHLFPVFFGF, ALGILVALDPWLGLACLATWV, and SLSALVTAVLAPVYAGLLLGW.

The protein belongs to the PlsY family. As to quaternary structure, probably interacts with PlsX.

It localises to the cell inner membrane. It carries out the reaction an acyl phosphate + sn-glycerol 3-phosphate = a 1-acyl-sn-glycero-3-phosphate + phosphate. The protein operates within lipid metabolism; phospholipid metabolism. Catalyzes the transfer of an acyl group from acyl-phosphate (acyl-PO(4)) to glycerol-3-phosphate (G3P) to form lysophosphatidic acid (LPA). This enzyme utilizes acyl-phosphate as fatty acyl donor, but not acyl-CoA or acyl-ACP. The chain is Glycerol-3-phosphate acyltransferase from Thiobacillus denitrificans (strain ATCC 25259 / T1).